Reading from the N-terminus, the 439-residue chain is ATP-dependent RNA helicase RhlB (439 aa).

Residues 9–37 (QKFADLPLHPEVKQALAENGFEFCTPIQA) carry the Q motif motif. One can recognise a Helicase ATP-binding domain in the interval 40–219 (LPVLLQSKDI…YDHMNDPVKV (180 aa)). ATP is bound at residue 53–60 (AQTGTGKT). The DEAD box signature appears at 165–168 (DEAD). Residues 243–390 (KIRLLLTLIE…VSNYDRDALL (148 aa)) form the Helicase C-terminal domain. The interval 395-439 (PPVKIHRKHPAGARNLRERSGAGRPQGAHRSGGRPPRHDRTRRQP) is disordered. A compositionally biased stretch (basic residues) spans 425 to 439 (SGGRPPRHDRTRRQP).

Belongs to the DEAD box helicase family. RhlB subfamily. As to quaternary structure, component of the RNA degradosome, which is a multiprotein complex involved in RNA processing and mRNA degradation.

The protein localises to the cytoplasm. The enzyme catalyses ATP + H2O = ADP + phosphate + H(+). DEAD-box RNA helicase involved in RNA degradation. Has RNA-dependent ATPase activity and unwinds double-stranded RNA. This is ATP-dependent RNA helicase RhlB from Shewanella sp. (strain MR-4).